The following is a 142-amino-acid chain: Transcriptional regulator MraZ (142 aa).

SpoVT-AbrB domains are found at residues E5 to E47 and A76 to K119.

The protein belongs to the MraZ family. In terms of assembly, forms oligomers.

The protein localises to the cytoplasm. It localises to the nucleoid. The protein is Transcriptional regulator MraZ of Clostridium acetobutylicum (strain ATCC 824 / DSM 792 / JCM 1419 / IAM 19013 / LMG 5710 / NBRC 13948 / NRRL B-527 / VKM B-1787 / 2291 / W).